Consider the following 419-residue polypeptide: Tyrosine--tRNA ligase 2 (419 aa).

Residue Y34 coordinates L-tyrosine. Positions 39-48 match the 'HIGH' region motif; sequence PTGDSMHIGH. The L-tyrosine site is built by Y168 and Q172. Residues 230–234 carry the 'KMSKS' region motif; that stretch reads KFGKS. An ATP-binding site is contributed by K233. The S4 RNA-binding domain maps to 352 to 418; it reads KNIVEWLVDL…GKKNYSLVKL (67 aa).

This sequence belongs to the class-I aminoacyl-tRNA synthetase family. TyrS type 1 subfamily. In terms of assembly, homodimer.

It is found in the cytoplasm. The enzyme catalyses tRNA(Tyr) + L-tyrosine + ATP = L-tyrosyl-tRNA(Tyr) + AMP + diphosphate + H(+). In terms of biological role, catalyzes the attachment of tyrosine to tRNA(Tyr) in a two-step reaction: tyrosine is first activated by ATP to form Tyr-AMP and then transferred to the acceptor end of tRNA(Tyr). This chain is Tyrosine--tRNA ligase 2, found in Bacillus cereus (strain ZK / E33L).